Here is a 200-residue protein sequence, read N- to C-terminus: MHDYLYLASQSPRRRELLTQLGVRYELLLADDEEDAEALEVVQPGETPDDYVQRVCALKAEAALRRRERRALPDAPILTSDTTVCLGGEILGKPGDGADASAMLKALSGSTHRVLTAVTVVSTLGMHHALSISRVTFRAMTAAEIERYVDSGEPLGKAGAYGIQGRAAEFVERIEGSYSGIMGLPLFETAALLRQARLRF.

Asp81 functions as the Proton acceptor in the catalytic mechanism.

The protein belongs to the Maf family. YhdE subfamily. A divalent metal cation serves as cofactor.

The protein localises to the cytoplasm. It carries out the reaction dTTP + H2O = dTMP + diphosphate + H(+). It catalyses the reaction UTP + H2O = UMP + diphosphate + H(+). In terms of biological role, nucleoside triphosphate pyrophosphatase that hydrolyzes dTTP and UTP. May have a dual role in cell division arrest and in preventing the incorporation of modified nucleotides into cellular nucleic acids. The sequence is that of dTTP/UTP pyrophosphatase from Cupriavidus pinatubonensis (strain JMP 134 / LMG 1197) (Cupriavidus necator (strain JMP 134)).